Reading from the N-terminus, the 85-residue chain is ATP synthase subunit c (85 aa).

2 helical membrane-spanning segments follow: residues 10–30 (GLALLGKYLGAGLCMGIGAIG) and 65–85 (AVAETTGIYSLLIAFMILLVV).

This sequence belongs to the ATPase C chain family. As to quaternary structure, F-type ATPases have 2 components, F(1) - the catalytic core - and F(0) - the membrane proton channel. F(1) has five subunits: alpha(3), beta(3), gamma(1), delta(1), epsilon(1). F(0) has three main subunits: a(1), b(2) and c(10-14). The alpha and beta chains form an alternating ring which encloses part of the gamma chain. F(1) is attached to F(0) by a central stalk formed by the gamma and epsilon chains, while a peripheral stalk is formed by the delta and b chains.

Its subcellular location is the cell inner membrane. Functionally, f(1)F(0) ATP synthase produces ATP from ADP in the presence of a proton or sodium gradient. F-type ATPases consist of two structural domains, F(1) containing the extramembraneous catalytic core and F(0) containing the membrane proton channel, linked together by a central stalk and a peripheral stalk. During catalysis, ATP synthesis in the catalytic domain of F(1) is coupled via a rotary mechanism of the central stalk subunits to proton translocation. Its function is as follows. Key component of the F(0) channel; it plays a direct role in translocation across the membrane. A homomeric c-ring of between 10-14 subunits forms the central stalk rotor element with the F(1) delta and epsilon subunits. This chain is ATP synthase subunit c, found in Thermotoga maritima (strain ATCC 43589 / DSM 3109 / JCM 10099 / NBRC 100826 / MSB8).